Reading from the N-terminus, the 418-residue chain is 3-phosphoshikimate 1-carboxyvinyltransferase (418 aa).

Residues Lys26, Ser27, and Arg31 each coordinate 3-phosphoshikimate. Position 26 (Lys26) interacts with phosphoenolpyruvate. Positions 97 and 125 each coordinate phosphoenolpyruvate. 3-phosphoshikimate-binding residues include Ser170, Ser171, Gln172, Asp297, Asn320, and Lys324. Position 172 (Gln172) interacts with phosphoenolpyruvate. The Proton acceptor role is filled by Asp297. Arg328, Arg375, and Lys400 together coordinate phosphoenolpyruvate.

Belongs to the EPSP synthase family. As to quaternary structure, monomer.

The protein localises to the cytoplasm. The enzyme catalyses 3-phosphoshikimate + phosphoenolpyruvate = 5-O-(1-carboxyvinyl)-3-phosphoshikimate + phosphate. It functions in the pathway metabolic intermediate biosynthesis; chorismate biosynthesis; chorismate from D-erythrose 4-phosphate and phosphoenolpyruvate: step 6/7. Functionally, catalyzes the transfer of the enolpyruvyl moiety of phosphoenolpyruvate (PEP) to the 5-hydroxyl of shikimate-3-phosphate (S3P) to produce enolpyruvyl shikimate-3-phosphate and inorganic phosphate. The protein is 3-phosphoshikimate 1-carboxyvinyltransferase of Pseudomonas savastanoi pv. phaseolicola (strain 1448A / Race 6) (Pseudomonas syringae pv. phaseolicola (strain 1448A / Race 6)).